We begin with the raw amino-acid sequence, 484 residues long: Putative transporter B0252.3 (484 aa).

The next 11 membrane-spanning stretches (helical) occupy residues 43 to 63, 95 to 115, 121 to 141, 144 to 164, 183 to 203, 208 to 228, 286 to 306, 321 to 341, 348 to 368, 373 to 393, and 433 to 453; these read ILTCILVCGLAWSPLAFTGLC, STTTFYMVGNMIGGMFIPPLA, LPVFVATVLLMAVGGMISAFS, IMMFCIMRMIHGIFYTAAGLA, VYFGVMWVVGACFLGLLAYIL, YLMFCISVPNIFVALLIYMTV, MFIVYVLVMTYIWIVDTFIYF, LNFVLMSLVEAPAYIFSPIFM, VLISGTHIIAGLSFLGIVLSS, IHFWLLGKFAISCSFMSIYMF, and LAPAITLSLIAVSGGLLTLIL.

It belongs to the major facilitator superfamily. Sugar transporter (TC 2.A.1.1) family.

Its subcellular location is the membrane. The polypeptide is Putative transporter B0252.3 (Caenorhabditis elegans).